A 779-amino-acid chain; its full sequence is MIGKTFTTMLGGRELSIETGKLAKLVSGSVTVRYGDTLLLVTAQASDTQSKLDFLPLTVEFEERHYAVGKIPGSFQRREGRPGEKAILSARITDRQIRPLFPKGYRHETQVIITVLSADGQNAPDVLGPIGAAAALSISDIPWAGPTACVRVGQIDGQYVVNPTTEQLTRSRMDLVVAGTREAVMMVECGAQTVSEDDLVGAIEFAHAEMQGVIALIEQMRAEVGHEKFNFLAEEGPANDYVPELTEKAKAAGLRDALLTHGKKDRSARLKALRNGLIEGYVPDPTAEGSAELTQALKDAFGKVEKRELRRLILEENLRADGRDSKTVRPIWIEARPLPTAHGSAVFTRGETQVLGVTTLGTERDEILIDDLTAESGDKFLLHYNFPPYSTGEVKRMGGQSRREIGHGNLAKRAIRAVLPSFEEFPYVIRVVGDVLESNGSSSMGTVCAGTLSLMDAGVPLKAPVAGVAMGLVMEGDNYRVLTDILGLEDALGDMDFKVCGTAEGVTALQMDIKVGGITPQIMREALAQAKEGRLHILGKMAEVLAAPRAELSPTAPHILSLKINPELIGKVIGPGGKQVRELEAMGAQVTIEEDGTVRIFSASGESAEAVKARIEAVTKEAKVGEEFEGTVVKIAPFGAFVNLFPGQDGMLHISQLSEQRVENVEDVLTVGDKLKVKIANIDDRGKIDLIRPELEGKVPLREPRAPRGGDRGPRRDSDRGGDRGPRREFSDRGPRPEGARSERPEGQRTERPATAPATQESSQSSDAPAAPVFPRRED.

Residues D490 and D496 each contribute to the Mg(2+) site. The KH domain occupies 557-618 (PHILSLKINP…EAVKARIEAV (62 aa)). The 69-residue stretch at 625–693 (GEEFEGTVVK…DRGKIDLIRP (69 aa)) folds into the S1 motif domain. A compositionally biased stretch (basic and acidic residues) spans 699 to 752 (VPLREPRAPRGGDRGPRRDSDRGGDRGPRREFSDRGPRPEGARSERPEGQRTER). The tract at residues 699–779 (VPLREPRAPR…AAPVFPRRED (81 aa)) is disordered. Residues 757 to 767 (PATQESSQSSD) show a composition bias toward polar residues.

The protein belongs to the polyribonucleotide nucleotidyltransferase family. The cofactor is Mg(2+).

The protein localises to the cytoplasm. The catalysed reaction is RNA(n+1) + phosphate = RNA(n) + a ribonucleoside 5'-diphosphate. In terms of biological role, involved in mRNA degradation. Catalyzes the phosphorolysis of single-stranded polyribonucleotides processively in the 3'- to 5'-direction. The protein is Polyribonucleotide nucleotidyltransferase of Deinococcus radiodurans (strain ATCC 13939 / DSM 20539 / JCM 16871 / CCUG 27074 / LMG 4051 / NBRC 15346 / NCIMB 9279 / VKM B-1422 / R1).